The following is a 232-amino-acid chain: Phosphoribosylformylglycinamidine synthase subunit PurQ (232 aa).

The 231-residue stretch at Lys-2–Phe-232 folds into the Glutamine amidotransferase type-1 domain. Cys-86 (nucleophile) is an active-site residue. Catalysis depends on residues His-203 and Glu-205.

In terms of assembly, part of the FGAM synthase complex composed of 1 PurL, 1 PurQ and 2 PurS subunits.

The protein resides in the cytoplasm. It catalyses the reaction N(2)-formyl-N(1)-(5-phospho-beta-D-ribosyl)glycinamide + L-glutamine + ATP + H2O = 2-formamido-N(1)-(5-O-phospho-beta-D-ribosyl)acetamidine + L-glutamate + ADP + phosphate + H(+). The catalysed reaction is L-glutamine + H2O = L-glutamate + NH4(+). It functions in the pathway purine metabolism; IMP biosynthesis via de novo pathway; 5-amino-1-(5-phospho-D-ribosyl)imidazole from N(2)-formyl-N(1)-(5-phospho-D-ribosyl)glycinamide: step 1/2. Its function is as follows. Part of the phosphoribosylformylglycinamidine synthase complex involved in the purines biosynthetic pathway. Catalyzes the ATP-dependent conversion of formylglycinamide ribonucleotide (FGAR) and glutamine to yield formylglycinamidine ribonucleotide (FGAM) and glutamate. The FGAM synthase complex is composed of three subunits. PurQ produces an ammonia molecule by converting glutamine to glutamate. PurL transfers the ammonia molecule to FGAR to form FGAM in an ATP-dependent manner. PurS interacts with PurQ and PurL and is thought to assist in the transfer of the ammonia molecule from PurQ to PurL. The chain is Phosphoribosylformylglycinamidine synthase subunit PurQ from Methanosarcina barkeri (strain Fusaro / DSM 804).